The chain runs to 106 residues: PTS system fructose-like EIIB component 2 (106 aa).

Residues 1–103 (MTKIIAVTAC…IMSKIEAHLA (103 aa)) enclose the PTS EIIB type-2 domain. C10 serves as the catalytic Phosphocysteine intermediate. The residue at position 10 (C10) is a Phosphocysteine; by EIIA.

It is found in the cytoplasm. It carries out the reaction D-fructose(out) + N(pros)-phospho-L-histidyl-[protein] = D-fructose 1-phosphate(in) + L-histidyl-[protein]. Functionally, the phosphoenolpyruvate-dependent sugar phosphotransferase system (sugar PTS), a major carbohydrate active transport system, catalyzes the phosphorylation of incoming sugar substrates concomitantly with their translocation across the cell membrane. The enzyme II FrwABC PTS system is involved in fructose transport. In Escherichia coli O157:H7, this protein is PTS system fructose-like EIIB component 2 (frwB).